Here is a 1372-residue protein sequence, read N- to C-terminus: DNA-directed RNA polymerase subunit beta' (1372 aa).

C69, C71, C84, and C87 together coordinate Zn(2+). Mg(2+) is bound by residues D460, D462, and D464. 4 residues coordinate Zn(2+): C808, C882, C889, and C892.

The protein belongs to the RNA polymerase beta' chain family. As to quaternary structure, the RNAP catalytic core consists of 2 alpha, 1 beta, 1 beta' and 1 omega subunit. When a sigma factor is associated with the core the holoenzyme is formed, which can initiate transcription. Requires Mg(2+) as cofactor. Zn(2+) serves as cofactor.

The catalysed reaction is RNA(n) + a ribonucleoside 5'-triphosphate = RNA(n+1) + diphosphate. Its function is as follows. DNA-dependent RNA polymerase catalyzes the transcription of DNA into RNA using the four ribonucleoside triphosphates as substrates. In Rickettsia typhi (strain ATCC VR-144 / Wilmington), this protein is DNA-directed RNA polymerase subunit beta'.